The chain runs to 733 residues: MSFSNPRRRTPVTRPGTDCEHGLSLKTTMTLRKGATFHSPTSPSASSAAGDFVPPTLTRSQSAFDDVVDASRRRIAMTLNDIDEALSKASLSDKSPRPKPLRDTSLPVPRGFLEPPVVDPAMNKQEPERRVLRPRSVRRTRNHASDSGIGSSVVSTNDKAGAADSTKKPQASALTRSAASSTTAMLPSLSHRAVNRIREHTLRPLLEKPTLKEFEPIVLDVPRRIRSKEIICLRDLEKTLIFMAPEKAKSAALYLDFCLTSVRCIQATVEYLTDREQVRPGDRPYTNGYFIDLKEQIYQYGKQLAAIKEKGSLADDMDIDPSDEVRLYGGVAENGRPAELIRVKKDGTAYSMATGKIVDMTESPTPLKRSLSEQREDEEEIMRSMARRKKNATPEDVAPKKCREPGCTKEFKRPCDLTKHEKTHSRPWKCPIPTCKYHEYGWPTEKEMDRHINDKHSDAPAMYECLFKPCPYKSKRESNCKQHMEKAHGWTYVRTKTNGKKAPSQNGSTAQQTPPLANVSTPSSTPSYSVPTPPQDQVMSTDFPMYPADDDWLATYGAQPNTIDAMDLGLENLSPASAASSYEQYPPYQNGSTFIINDEDIYAAHVQIPAQLPTPEQVYTKMMPQQMPVYHVQQEPCTTVPILGEPQFSPNAQQNAVLYTPTSLREVDEGFDESYAADGADFQLFPATVDKTDVFQSLFTDMPSANLGFSQTTQPDIFNQIDWSNLDYQGFQE.

Residues 1 to 11 show a composition bias toward basic residues; sequence MSFSNPRRRTP. 3 disordered regions span residues 1 to 22, 34 to 63, and 89 to 183; these read MSFSNPRRRTPVTRPGTDCEHG, GATFHSPTSPSASSAAGDFVPPTLTRSQSA, and ASLS…SSTT. Residues 39-49 show a composition bias toward low complexity; sequence SPTSPSASSAA. Basic residues predominate over residues 132–142; it reads LRPRSVRRTRN. The span at 148–158 shows a compositional bias: polar residues; it reads GIGSSVVSTND. Residues 171–183 are compositionally biased toward low complexity; that stretch reads ASALTRSAASSTT. 3 consecutive C2H2-type zinc fingers follow at residues 400 to 424, 428 to 456, and 463 to 488; these read KKCREPGCTKEFKRPCDLTKHEKTH, WKCPIPTCKYHEYGWPTEKEMDRHINDKH, and YECLFKPCPYKSKRESNCKQHMEKAH. Residues 497–533 are disordered; that stretch reads TNGKKAPSQNGSTAQQTPPLANVSTPSSTPSYSVPTP. The span at 503–515 shows a compositional bias: polar residues; the sequence is PSQNGSTAQQTPP. The span at 519–530 shows a compositional bias: low complexity; that stretch reads VSTPSSTPSYSV.

The protein resides in the nucleus. Its function is as follows. Binds to the promoter of the cbh1 gene and activates transcription. This chain is Zinc finger transcription factor ace1 (ace1), found in Hypocrea jecorina (Trichoderma reesei).